Consider the following 591-residue polypeptide: Developmental and secondary metabolism regulator VEA1 (591 aa).

The disordered stretch occupies residues 1-22 (MATKASSILHPPNETEHTMSRI). A compositionally biased stretch (basic and acidic residues) spans 13-22 (NETEHTMSRI). In terms of domain architecture, Velvet spans 26-235 (GKKLTYNLKV…AEQGCRVRIR (210 aa)). The Nuclear localization signal signature appears at 40–45 (ERARAC). Residues 238–547 (VRMRRREPKP…TSGGSDDEIM (310 aa)) are disordered. The span at 245 to 260 (PKPNKDYGAYDDRRIT) shows a compositional bias: basic and acidic residues. Over residues 306-321 (HQQPSPNLAATPQSHL) the composition is skewed to polar residues. Residues 330–347 (YHAPPPPPTAHPAPPPAY) show a composition bias toward pro residues. A compositionally biased stretch (polar residues) spans 386–395 (YDQSKSSLPM). Residues 422-433 (PSQLHPTQQYQQ) are compositionally biased toward low complexity. Residues 434 to 448 (PTPPPPPPAAIAPHP) show a composition bias toward pro residues. The tract at residues 452 to 493 (RTPTKPSPSTFFPPTPSRLSVEVDSSNEADDAILNAIRTRRG) is PEST. Residues 494–516 (YILDEKSGATKRSRDSSDHDLKP) show a composition bias toward basic and acidic residues.

The protein belongs to the velvet family. VeA subfamily. In terms of assembly, component of the heterotrimeric velvet complex composed of LAE1, VEA1 and VEL2; VEA1 acting as a bridging protein between LAE1 and VEL2.

The protein localises to the nucleus. The protein resides in the cytoplasm. In terms of biological role, component of the velvet transcription factor complex that controls sexual/asexual developmental ratio in response to light, promoting sexual development in the darkness while stimulating asexual sporulation under illumination. The velvet complex hat acts as a global regulator for secondary metabolite gene expression. Regulates cleistothecial formation and hyphal growth. Acts as a positive regulator of virulence. In Ajellomyces capsulatus (Darling's disease fungus), this protein is Developmental and secondary metabolism regulator VEA1.